The primary structure comprises 40 residues: Photosystem II reaction center protein J (40 aa).

A helical membrane pass occupies residues 8 to 28; the sequence is IPLWVIGTVAGIPVIGLIGIF.

This sequence belongs to the PsbJ family. In terms of assembly, PSII is composed of 1 copy each of membrane proteins PsbA, PsbB, PsbC, PsbD, PsbE, PsbF, PsbH, PsbI, PsbJ, PsbK, PsbL, PsbM, PsbT, PsbX, PsbY, PsbZ, Psb30/Ycf12, at least 3 peripheral proteins of the oxygen-evolving complex and a large number of cofactors. It forms dimeric complexes.

The protein resides in the plastid. It is found in the chloroplast thylakoid membrane. In terms of biological role, one of the components of the core complex of photosystem II (PSII). PSII is a light-driven water:plastoquinone oxidoreductase that uses light energy to abstract electrons from H(2)O, generating O(2) and a proton gradient subsequently used for ATP formation. It consists of a core antenna complex that captures photons, and an electron transfer chain that converts photonic excitation into a charge separation. The protein is Photosystem II reaction center protein J of Nasturtium officinale (Watercress).